A 141-amino-acid chain; its full sequence is Hemoglobin subunit alpha (141 aa).

Positions 1–141 (VLSAADKTAI…VATALGSHYR (141 aa)) constitute a Globin domain. His-59 contributes to the O2 binding site. Residue His-88 coordinates heme b.

Belongs to the globin family. In terms of assembly, heterotetramer of two alpha chains and two beta chains. In terms of tissue distribution, red blood cells.

Its function is as follows. Involved in oxygen transport from the lung to the various peripheral tissues. In Squalus acanthias (Spiny dogfish), this protein is Hemoglobin subunit alpha (HBA).